The following is a 387-amino-acid chain: Succinate--CoA ligase [ADP-forming] subunit beta (387 aa).

The ATP-grasp domain occupies 9–244; the sequence is KHILSKFGVN…YDEEIKEEIE (236 aa). Residues lysine 46, 53 to 55, glutamate 99, cysteine 102, and glutamate 107 each bind ATP; that span reads GRG. Mg(2+) is bound by residues asparagine 199 and aspartate 213. Residues asparagine 264 and 321-323 each bind substrate; that span reads GIM.

The protein belongs to the succinate/malate CoA ligase beta subunit family. In terms of assembly, heterotetramer of two alpha and two beta subunits. Mg(2+) serves as cofactor.

The enzyme catalyses succinate + ATP + CoA = succinyl-CoA + ADP + phosphate. It carries out the reaction GTP + succinate + CoA = succinyl-CoA + GDP + phosphate. It participates in carbohydrate metabolism; tricarboxylic acid cycle; succinate from succinyl-CoA (ligase route): step 1/1. Its function is as follows. Succinyl-CoA synthetase functions in the citric acid cycle (TCA), coupling the hydrolysis of succinyl-CoA to the synthesis of either ATP or GTP and thus represents the only step of substrate-level phosphorylation in the TCA. The beta subunit provides nucleotide specificity of the enzyme and binds the substrate succinate, while the binding sites for coenzyme A and phosphate are found in the alpha subunit. The polypeptide is Succinate--CoA ligase [ADP-forming] subunit beta (Ehrlichia chaffeensis (strain ATCC CRL-10679 / Arkansas)).